The sequence spans 398 residues: S-adenosylmethionine decarboxylase proenzyme (398 aa).

Residues Glu-18 and Glu-21 contribute to the active site. Ser-78 functions as the Schiff-base intermediate with substrate; via pyruvic acid in the catalytic mechanism. Position 78 is a pyruvic acid (Ser); by autocatalysis (Ser-78). Residue Cys-92 is the Proton donor; for catalytic activity of the active site. Active-site proton acceptor; for processing activity residues include Ser-243 and His-256.

Belongs to the eukaryotic AdoMetDC family. It depends on pyruvate as a cofactor. Is synthesized initially as an inactive proenzyme. Formation of the active enzyme involves a self-maturation process in which the active site pyruvoyl group is generated from an internal serine residue via an autocatalytic post-translational modification. Two non-identical subunits are generated from the proenzyme in this reaction, and the pyruvate is formed at the N-terminus of the alpha chain, which is derived from the carboxyl end of the proenzyme. The post-translation cleavage follows an unusual pathway, termed non-hydrolytic serinolysis, in which the side chain hydroxyl group of the serine supplies its oxygen atom to form the C-terminus of the beta chain, while the remainder of the serine residue undergoes an oxidative deamination to produce ammonia and the pyruvoyl group blocking the N-terminus of the alpha chain.

The catalysed reaction is S-adenosyl-L-methionine + H(+) = S-adenosyl 3-(methylsulfanyl)propylamine + CO2. It participates in amine and polyamine biosynthesis; S-adenosylmethioninamine biosynthesis; S-adenosylmethioninamine from S-adenosyl-L-methionine: step 1/1. In Oryza sativa subsp. indica (Rice), this protein is S-adenosylmethionine decarboxylase proenzyme (SAMDC).